The chain runs to 72 residues: Translation initiation factor IF-1 (72 aa).

Positions 1 to 72 constitute an S1-like domain; that stretch reads MSKDDVIEMQ…TRGRITWRAK (72 aa).

The protein belongs to the IF-1 family. As to quaternary structure, component of the 30S ribosomal translation pre-initiation complex which assembles on the 30S ribosome in the order IF-2 and IF-3, IF-1 and N-formylmethionyl-tRNA(fMet); mRNA recruitment can occur at any time during PIC assembly.

The protein resides in the cytoplasm. Its function is as follows. One of the essential components for the initiation of protein synthesis. Stabilizes the binding of IF-2 and IF-3 on the 30S subunit to which N-formylmethionyl-tRNA(fMet) subsequently binds. Helps modulate mRNA selection, yielding the 30S pre-initiation complex (PIC). Upon addition of the 50S ribosomal subunit IF-1, IF-2 and IF-3 are released leaving the mature 70S translation initiation complex. This chain is Translation initiation factor IF-1, found in Clostridium kluyveri (strain ATCC 8527 / DSM 555 / NBRC 12016 / NCIMB 10680 / K1).